Consider the following 250-residue polypeptide: 6-phosphogluconate dehydrogenase, decarboxylating (250 aa).

Substrate is bound by residues Lys-29 and Arg-56. Lys-77 is modified (N6-acetyllysine). Residues Arg-214 and His-220 each contribute to the substrate site. Residue 245-248 coordinates NADP(+); that stretch reads SSSY.

The protein belongs to the 6-phosphogluconate dehydrogenase family. Homodimer.

The protein localises to the cytoplasm. It catalyses the reaction 6-phospho-D-gluconate + NADP(+) = D-ribulose 5-phosphate + CO2 + NADPH. Its pathway is carbohydrate degradation; pentose phosphate pathway; D-ribulose 5-phosphate from D-glucose 6-phosphate (oxidative stage): step 3/3. Its function is as follows. Catalyzes the oxidative decarboxylation of 6-phosphogluconate to ribulose 5-phosphate and CO(2), with concomitant reduction of NADP to NADPH. The sequence is that of 6-phosphogluconate dehydrogenase, decarboxylating (PGD) from Sus scrofa (Pig).